We begin with the raw amino-acid sequence, 405 residues long: DNA primase DnaG (405 aa).

Residues 172-248 (DSIIVVEGRA…HIDYIARAPP (77 aa)) form the Toprim domain. The Mg(2+) site is built by Glu178, Asp222, and Asp224. Residues 279–302 (AAGEKTESQMSPQQPQLTQTQPTT) are disordered. The span at 290–302 (PQQPQLTQTQPTT) shows a compositional bias: low complexity.

It belongs to the archaeal DnaG primase family. As to quaternary structure, forms a ternary complex with MCM helicase and DNA. Component of the archaeal exosome complex. Mg(2+) serves as cofactor.

The enzyme catalyses ssDNA + n NTP = ssDNA/pppN(pN)n-1 hybrid + (n-1) diphosphate.. Its function is as follows. RNA polymerase that catalyzes the synthesis of short RNA molecules used as primers for DNA polymerase during DNA replication. Also part of the exosome, which is a complex involved in RNA degradation. Acts as a poly(A)-binding protein that enhances the interaction between heteromeric, adenine-rich transcripts and the exosome. The protein is DNA primase DnaG of Pyrobaculum islandicum (strain DSM 4184 / JCM 9189 / GEO3).